A 270-amino-acid polypeptide reads, in one-letter code: Tetracenomycin polyketide synthesis O-methyltransferase TcmP (270 aa).

Its pathway is antibiotic biosynthesis; tetracenomycin C biosynthesis. In terms of biological role, O-methyltransferase that catalyzes the methylation of the C-9 carboxy group of tetracenomycin E (TCM E) to yield TCM A2. Catalyzes as well the following side reactions: methylation of 8-O-methyl-TCM D3 to 9-carboxymethyl-8-O-methyl-TCM D3; and of TCM B3 to 9-carboxymethyl-TCM B3. This is Tetracenomycin polyketide synthesis O-methyltransferase TcmP (tcmP) from Streptomyces glaucescens.